Here is a 227-residue protein sequence, read N- to C-terminus: uncharacterized protein (227 aa).

Helical transmembrane passes span 12–32 and 80–100; these read IVLFLIINILPILILGLYLYA and IILINGIYIGNHGSFGIKIPL.

The protein localises to the cell membrane. This is an uncharacterized protein from Methanocaldococcus jannaschii (strain ATCC 43067 / DSM 2661 / JAL-1 / JCM 10045 / NBRC 100440) (Methanococcus jannaschii).